The following is a 274-amino-acid chain: Large ribosomal subunit protein uL2 (274 aa).

Residues 223–274 (VAMNPVDHPHGGGEGRTSGGRHPVTPWGVPTKGYKTRSNKRTDKYIVRRRNK) are disordered.

It belongs to the universal ribosomal protein uL2 family. Part of the 50S ribosomal subunit. Forms a bridge to the 30S subunit in the 70S ribosome.

In terms of biological role, one of the primary rRNA binding proteins. Required for association of the 30S and 50S subunits to form the 70S ribosome, for tRNA binding and peptide bond formation. It has been suggested to have peptidyltransferase activity; this is somewhat controversial. Makes several contacts with the 16S rRNA in the 70S ribosome. This Shewanella oneidensis (strain ATCC 700550 / JCM 31522 / CIP 106686 / LMG 19005 / NCIMB 14063 / MR-1) protein is Large ribosomal subunit protein uL2.